A 434-amino-acid chain; its full sequence is 3-phosphoshikimate 1-carboxyvinyltransferase (434 aa).

The 3-phosphoshikimate site is built by Lys-22, Ser-23, and Arg-27. Position 22 (Lys-22) interacts with phosphoenolpyruvate. Positions 93 and 121 each coordinate phosphoenolpyruvate. 3-phosphoshikimate is bound by residues Ser-168, Ser-169, Gln-170, Ser-199, Asp-320, and Lys-347. Gln-170 contacts phosphoenolpyruvate. Residue Asp-320 is the Proton acceptor of the active site. Arg-351, Arg-395, and Lys-420 together coordinate phosphoenolpyruvate.

This sequence belongs to the EPSP synthase family. As to quaternary structure, monomer.

The protein localises to the cytoplasm. The enzyme catalyses 3-phosphoshikimate + phosphoenolpyruvate = 5-O-(1-carboxyvinyl)-3-phosphoshikimate + phosphate. It participates in metabolic intermediate biosynthesis; chorismate biosynthesis; chorismate from D-erythrose 4-phosphate and phosphoenolpyruvate: step 6/7. Functionally, catalyzes the transfer of the enolpyruvyl moiety of phosphoenolpyruvate (PEP) to the 5-hydroxyl of shikimate-3-phosphate (S3P) to produce enolpyruvyl shikimate-3-phosphate and inorganic phosphate. This is 3-phosphoshikimate 1-carboxyvinyltransferase from Cupriavidus taiwanensis (strain DSM 17343 / BCRC 17206 / CCUG 44338 / CIP 107171 / LMG 19424 / R1) (Ralstonia taiwanensis (strain LMG 19424)).